Reading from the N-terminus, the 314-residue chain is Thioredoxin reductase aclD (314 aa).

Residues 13-16 (GGPA), 35-40 (DSKSYR), H47, and A112 each bind FAD. A disulfide bridge connects residues C136 and C139. Residues D281 and 288–289 (AA) contribute to the FAD site.

It belongs to the class-II pyridine nucleotide-disulfide oxidoreductase family. As to quaternary structure, homodimer. It depends on FAD as a cofactor.

Its pathway is mycotoxin biosynthesis. In terms of biological role, thioredoxin reductase; part of the gene cluster that mediates the biosynthesis of aspirochlorine (or antibiotic A30641), an unusual halogenated spiro compound with distinctive antifungal properties due to selective inhibition of protein biosynthesis, and which is also active against bacteria, viruses, and murine tumor cells. The non-ribosomal peptide synthetase (NRPS) aclP is responsible the formation of the diketopiperazine (DKP) core from the condensation of 2 phenylalanine residues. One Phe residue is tailored into chlorotyrosine by hydroxylation and chlorination, whereas the second Phe undergoes an unprecedented C-C bond cleavage to be converted into glycine. After formation of the DKP, sulfur is incorporated into the DKP by conjugation with glutathione by aclG, followed by its stepwise degradation to the thiol by aclI, aclJ and aclK, and the dithiol oxidation by aclT. In addition, oxygenases (aclB, aclC, aclL and aclO) and O-methyltransferases (aclM and aclU) act as tailoring enzymes to produce the intermediate dechloroaspirochlorine. Ultimately, chlorination of dechloroaspirochlorine by the halogenase aclH is the last step in the aspirochlorine pathway. This chain is Thioredoxin reductase aclD, found in Aspergillus oryzae (strain ATCC 42149 / RIB 40) (Yellow koji mold).